The primary structure comprises 405 residues: Probable tRNA sulfurtransferase (405 aa).

The 106-residue stretch at 60–165 (DQVMARLSQV…REAIYLSTKT (106 aa)) folds into the THUMP domain. ATP-binding positions include 183-184 (ML), 208-209 (HF), arginine 265, glycine 287, and glutamine 296.

It belongs to the ThiI family.

The protein localises to the cytoplasm. The catalysed reaction is [ThiI sulfur-carrier protein]-S-sulfanyl-L-cysteine + a uridine in tRNA + 2 reduced [2Fe-2S]-[ferredoxin] + ATP + H(+) = [ThiI sulfur-carrier protein]-L-cysteine + a 4-thiouridine in tRNA + 2 oxidized [2Fe-2S]-[ferredoxin] + AMP + diphosphate. It carries out the reaction [ThiS sulfur-carrier protein]-C-terminal Gly-Gly-AMP + S-sulfanyl-L-cysteinyl-[cysteine desulfurase] + AH2 = [ThiS sulfur-carrier protein]-C-terminal-Gly-aminoethanethioate + L-cysteinyl-[cysteine desulfurase] + A + AMP + 2 H(+). The protein operates within cofactor biosynthesis; thiamine diphosphate biosynthesis. Functionally, catalyzes the ATP-dependent transfer of a sulfur to tRNA to produce 4-thiouridine in position 8 of tRNAs, which functions as a near-UV photosensor. Also catalyzes the transfer of sulfur to the sulfur carrier protein ThiS, forming ThiS-thiocarboxylate. This is a step in the synthesis of thiazole, in the thiamine biosynthesis pathway. The sulfur is donated as persulfide by IscS. This chain is Probable tRNA sulfurtransferase, found in Lacticaseibacillus casei (strain BL23) (Lactobacillus casei).